Reading from the N-terminus, the 101-residue chain is Small ribosomal subunit protein uS14 (101 aa).

The segment at 51 to 72 is disordered; that stretch reads LPRDSSPSRQRNPCRQTGRPHG. Residues 52 to 65 are compositionally biased toward polar residues; the sequence is PRDSSPSRQRNPCR.

This sequence belongs to the universal ribosomal protein uS14 family. Part of the 30S ribosomal subunit. Contacts proteins S3 and S10.

In terms of biological role, binds 16S rRNA, required for the assembly of 30S particles and may also be responsible for determining the conformation of the 16S rRNA at the A site. This chain is Small ribosomal subunit protein uS14, found in Buchnera aphidicola subsp. Acyrthosiphon kondoi (Acyrthosiphon kondoi symbiotic bacterium).